The primary structure comprises 102 residues: Small ribosomal subunit protein uS10 (102 aa).

It belongs to the universal ribosomal protein uS10 family. As to quaternary structure, part of the 30S ribosomal subunit.

Its function is as follows. Involved in the binding of tRNA to the ribosomes. The polypeptide is Small ribosomal subunit protein uS10 (Streptococcus thermophilus (strain ATCC BAA-250 / LMG 18311)).